Consider the following 135-residue polypeptide: Histone H3 type 3 (135 aa).

A disordered region spans residues 1 to 40 (MARTKQTARKSTGGKAPRKQLATKAARKTPATGGVKKPHR). N6-methyllysine is present on Lys-5. At Lys-10 the chain carries N6-acetyllysine; alternate. N6-methyllysine; alternate is present on Lys-10. A Phosphoserine modification is found at Ser-11. The residue at position 12 (Thr-12) is a Phosphothreonine. N6-acetyllysine is present on residues Lys-15, Lys-19, and Lys-24. Lys-28 is modified (N6-acetyllysine; alternate). An N6-methyllysine; alternate modification is found at Lys-28. Lys-36 and Lys-37 each carry N6-methyllysine.

This sequence belongs to the histone H3 family. As to quaternary structure, the nucleosome is a histone octamer containing two molecules each of H2A, H2B, H3 and H4 assembled in one H3-H4 heterotetramer and two H2A-H2B heterodimers. The octamer wraps approximately 147 bp of DNA. Post-translationally, acetylation is generally linked to gene activation. Acetylated to form H3K9ac (11%), H3K14ac (17%), H3K18ac (11%), H3K23ac (16%) and H3K27ac (7%). H3K4, H3K35 and H3K36 are not acetylated. H3K4me prevents acetylation. 32% of the histone H3 are acetylated with, on average, 2.4 acetyl-Lys. They are all continuously deacatylated and re-acetylated with a half-life of approximately 2 minutes. In terms of processing, monomethylated to form H3K4me1 (81%), H3K9me1 (16%), H3K27me1 (25%), H3K35me1 (25%) and H3K36me1 (5%). No methylation at H3K14, H3K18 and H3K23. Methylated by a protein complex that includes Mut11. Set1 methylates specifically H3K4. H3K4me1 is associated with silenced euchromatin. Set3 forms H3K9me1, while H3K9me2 is undetected. H3K9me1 is specifically associated with silent, multi-copy transgenes. No phosphorylation detected.

The protein localises to the nucleus. The protein resides in the chromosome. Functionally, core component of nucleosome. Nucleosomes wrap and compact DNA into chromatin, limiting DNA accessibility to the cellular machineries which require DNA as a template. Histones thereby play a central role in transcription regulation, DNA repair, DNA replication and chromosomal stability. DNA accessibility is regulated via a complex set of post-translational modifications of histones, also called histone code, and nucleosome remodeling. This is Histone H3 type 3 (ch3-IV) from Chlamydomonas reinhardtii (Chlamydomonas smithii).